We begin with the raw amino-acid sequence, 465 residues long: Transcriptional protein swt1 (465 aa).

One can recognise a PINc domain in the interval 70-190; the sequence is GLFVLDTNFL…LLSDDKNLSI (121 aa).

Belongs to the SWT1 family.

It localises to the cytoplasm. Its subcellular location is the nucleus. Functionally, involved in transcription. The sequence is that of Transcriptional protein swt1 from Schizosaccharomyces pombe (strain 972 / ATCC 24843) (Fission yeast).